A 303-amino-acid polypeptide reads, in one-letter code: Caspase-7 (303 aa).

Positions 1–27 (MADDQNCAPELEKADPSGEDGVDAKPD) are disordered. An N-acetylalanine modification is found at alanine 2. Positions 2 to 23 (ADDQNCAPELEKADPSGEDGVD) are cleaved as a propeptide — N-terminally processed. Basic and acidic residues predominate over residues 10–27 (ELEKADPSGEDGVDAKPD). At serine 30 the chain carries Phosphoserine. The segment at 38–41 (KKKK) is exosite. A loop L1 region spans residues 76-87 (KNFDKVTGMDVR). Histidine 144 is an active-site residue. The residue at position 173 (threonine 173) is a Phosphothreonine. Residue cysteine 186 is part of the active site. Residues 187–196 (RGTELDDGVQ) are loop L2. Positions 199 to 206 (SGPINETD) are excised as a propeptide. The interval 226 to 238 (VPGYYSWRNPGKG) is loop L3. Serine 239 carries the phosphoserine modification. A loop L4 region spans residues 274-288 (ESQCDDPCFNEKKQI).

Belongs to the peptidase C14A family. As to quaternary structure, heterotetramer that consists of two anti-parallel arranged heterodimers, each one formed by a 20 kDa (p20) and a 11 kDa (p11) subunit. Interacts with XIAP (via its second BIR domain); inhibiting CASP7 activity. Interacts with BIRC6/bruce. Interacts with ATXN3 (short isoform 1). Interacts with HSPA5. Cleavage by different proteases, such as granzyme B (GZMB), caspase-1 (CASP1), caspase-8 (CASP8) or caspase-9 (CASP9) generate the two active subunits. Its involvement in different programmed cell death processes is probably specified by the protease that activates CASP7. Cleaved and activated by initiator caspases (CASP8 and/or CASP9), leading to execution phase of apoptosis. Cleavage and maturation by GZMB regulates granzyme-mediated programmed cell death. Cleaved and activated by CASP1 in response to bacterial infection. Propeptide domains can also be cleaved efficiently by CASP3. Active heterodimers between the small subunit of caspase-7 and the large subunit of CASP3, and vice versa, also occur. Also cleaved at the N-terminus at alternative sites by CAPN1, leading to its activation. Post-translationally, phosphorylation at Ser-30 and Ser-239 by PAK2 inhibits its activity. Phosphorylation at Ser-30 prevents cleavage and activation by initiator caspase CASP9, while phosphorylation at Ser-239 prevents thiol protease activity by preventing substrate-binding. In terms of processing, ubiquitinated by BIRC6; this activity is inhibited by DIABLO/SMAC.

The protein resides in the cytoplasm. The protein localises to the cytosol. Its subcellular location is the nucleus. It is found in the secreted. It localises to the extracellular space. It catalyses the reaction Strict requirement for an Asp residue at position P1 and has a preferred cleavage sequence of Asp-Glu-Val-Asp-|-.. With respect to regulation, during activation, the N-terminal disordered prodomain is removed by cleavage. Concomitantly, double cleavage gives rise to a large Caspase-7 subunit p20 and a small Caspase-7 subunit p11. The two large and two small subunits then assemble to form the active CASP7 complex. Can be cleaved and activated by different caspases, depending on the context. Cleaved and activated by initiator caspases (CASP8 and/or CASP9), leading to execution phase of apoptosis. Cleavage and maturation by GZMB regulates granzyme-mediated programmed cell death. Cleavage and maturation by CASP1 regulates pyroptosis. Inhibited by XIAP, which directly binds to the active site pocket and obstructs substrate entry. Phosphorylation at Ser-30 and Ser-239 by PAK2 inhibits its activity. Inhibited by BIRC6; following inhibition of BIRC6-caspase binding by DIABLO/SMAC, BIRC6 is subjected to caspase cleavage, leading to an increase in active caspases. Functionally, thiol protease involved in different programmed cell death processes, such as apoptosis, pyroptosis or granzyme-mediated programmed cell death, by proteolytically cleaving target proteins. Has a marked preference for Asp-Glu-Val-Asp (DEVD) consensus sequences, with some plasticity for alternate non-canonical sequences. Its involvement in the different programmed cell death processes is probably determined by upstream proteases that activate CASP7. Acts as an effector caspase involved in the execution phase of apoptosis: following cleavage and activation by initiator caspases (CASP8 and/or CASP9), mediates execution of apoptosis by catalyzing cleavage of proteins, such as CLSPN, PARP1, PTGES3 and YY1. Compared to CASP3, acts as a minor executioner caspase and cleaves a limited set of target proteins. Acts as a key regulator of the inflammatory response in response to bacterial infection by catalyzing cleavage and activation of the sphingomyelin phosphodiesterase SMPD1 in the extracellular milieu, thereby promoting membrane repair. Regulates pyroptosis in intestinal epithelial cells: cleaved and activated by CASP1 in response to S.typhimurium infection, promoting its secretion to the extracellular milieu, where it catalyzes activation of SMPD1, generating ceramides that repair membranes and counteract the action of gasdermin-D (GSDMD) pores. Regulates granzyme-mediated programmed cell death in hepatocytes: cleaved and activated by granzyme B (GZMB) in response to bacterial infection, promoting its secretion to the extracellular milieu, where it catalyzes activation of SMPD1, generating ceramides that repair membranes and counteract the action of perforin (PRF1) pores. Following cleavage by CASP1 in response to inflammasome activation, catalyzes processing and inactivation of PARP1, alleviating the transcription repressor activity of PARP1. Acts as an inhibitor of type I interferon production during virus-induced apoptosis by mediating cleavage of antiviral proteins CGAS, IRF3 and MAVS, thereby preventing cytokine overproduction. Cleaves and activates sterol regulatory element binding proteins (SREBPs). Cleaves phospholipid scramblase proteins XKR4, XKR8 and XKR9. Cleaves BIRC6 following inhibition of BIRC6-caspase binding by DIABLO/SMAC. This Mesocricetus auratus (Golden hamster) protein is Caspase-7 (CASP7).